We begin with the raw amino-acid sequence, 342 residues long: Photosystem II assembly lipoprotein Ycf48 (342 aa).

The signal sequence occupies residues 1-28; that stretch reads MPVKFPSLKFEQLKQLVLVAAIAVFCVS. A lipid anchor (N-palmitoyl cysteine) is attached at cysteine 29. A lipid anchor (S-diacylglycerol cysteine) is attached at cysteine 29. Residues 196–220 carry the Arg-rich patch motif; the sequence is RGNFYSTWAPGQTEWTPHNRNSSRR. A propeptide spanning residues 340–342 is cleaved from the precursor; sequence MVP.

The protein belongs to the Ycf48 family. In terms of assembly, part of early PSII assembly complexes which includes D1 (psbA) and PsbI; not found in mature PSII. By two-hybrid analysis in yeast interacts with precursor and intermediate forms of D1, but less with mature D1. Binds to the lumenal side of PSI and PSII complexes. Coimmunoprecipitates with YidC. Purified chlorophyll- and carotenoid-containing photosystem II (PSII) assembly intermediate complex RCII* (iD1, D1, D2, PsbE, PsbF, PsbI, Ycf39, Ycf48, HliC and HliD). The last 3 residues are removed in the mature protein.

The protein resides in the cellular thylakoid membrane. Functionally, a factor required for optimal assembly of photosystem II (PSII) which acts in the early stages of PSII assembly. Also plays a role in replacement of photodamaged D1 (psbA). May interact with precursor D1 to prevent its premature processing before association with D2 (psbD). May also play a role in chlorophyll insertion into chlorophyll-binding proteins. Increasing levels of chlorophyll precursors partially suppresses deletion of this protein, supporting the idea that Ycf48 assists YidC in synthesis of chlorophyll-binding proteins. The Ycf39-Hlip complex binds D1 at an early stage of PSII assembly along with Ycf48, ribosomes and ChlG, the last enzyme in chlorophyll biosynthesis; it may be involved in chlorophyll reuse and delivery to D1 in the initial stages of PSII assembly. This Synechocystis sp. (strain ATCC 27184 / PCC 6803 / Kazusa) protein is Photosystem II assembly lipoprotein Ycf48.